The following is an 854-amino-acid chain: DNA mismatch repair protein MutS (854 aa).

615–622 contacts ATP; sequence GPNMGGKS.

It belongs to the DNA mismatch repair MutS family.

Its function is as follows. This protein is involved in the repair of mismatches in DNA. It is possible that it carries out the mismatch recognition step. This protein has a weak ATPase activity. This chain is DNA mismatch repair protein MutS, found in Aliivibrio fischeri (strain MJ11) (Vibrio fischeri).